Reading from the N-terminus, the 282-residue chain is Glycine betaine/carnitine transport permease protein GbuB (282 aa).

The next 6 membrane-spanning stretches (helical) occupy residues 44–64 (VFDL…TFWV), 70–90 (KWGL…LDFW), 99–119 (LVLT…IWMA), 140–160 (AFVY…PGVV), 220–240 (IMLA…GLGT), and 251–271 (AGGG…LDRL). An ABC transmembrane type-1 domain is found at 93–272 (MTQTLTLVLT…IVAIILDRLT (180 aa)).

This sequence belongs to the binding-protein-dependent transport system permease family. In terms of assembly, the complex is composed of two ATP-binding proteins (GbuA), two transmembrane proteins (GbuB) and a solute-binding protein (GbuC).

The protein resides in the cell membrane. Its activity is regulated as follows. The complex is activated by an osmotic gradient or by low temperature. Its function is as follows. Part of the ABC transporter complex GbuABC involved in glycine betaine uptake. Responsible for the translocation of the substrate across the membrane. Involved, with BetL and OpuC, in osmoprotection and cryoprotection of Listeria. Can also uptake carnitine when carnitine is abundant in the growth medium. This chain is Glycine betaine/carnitine transport permease protein GbuB (gbuB), found in Listeria monocytogenes serotype 1/2a (strain 10403S).